Reading from the N-terminus, the 427-residue chain is 5'-deoxyadenosine deaminase (427 aa).

Zn(2+) is bound by residues His62 and His64. Residues Glu91 and His183 each coordinate substrate. Residue His210 participates in Zn(2+) binding. Positions 213 and 298 each coordinate substrate. Residue Asp298 participates in Zn(2+) binding.

It belongs to the metallo-dependent hydrolases superfamily. MTA/SAH deaminase family. In terms of assembly, homotetramer. It depends on Zn(2+) as a cofactor.

The catalysed reaction is 5'-deoxyadenosine + H2O + H(+) = 5'-deoxyinosine + NH4(+). It carries out the reaction S-adenosyl-L-homocysteine + H2O + H(+) = S-inosyl-L-homocysteine + NH4(+). It catalyses the reaction S-methyl-5'-thioadenosine + H2O + H(+) = S-methyl-5'-thioinosine + NH4(+). The enzyme catalyses adenosine + H2O + H(+) = inosine + NH4(+). The protein operates within amino-acid biosynthesis; S-adenosyl-L-methionine biosynthesis. Catalyzes the deamination of three SAM-derived enzymatic products, namely 5'-deoxyadenosine, S-adenosyl-L-homocysteine, and 5'-methylthioadenosine, to produce the inosine analogs. Can also deaminate adenosine. The preferred substrate for this enzyme is 5'-deoxyadenosine, but all these substrates are efficiently deaminated. Likely functions in a S-adenosyl-L-methionine (SAM) recycling pathway from S-adenosyl-L-homocysteine (SAH) produced from SAM-dependent methylation reactions. May also be involved in the recycling of 5'-deoxyadenosine, whereupon the 5'-deoxyribose moiety of 5'-deoxyinosine is further metabolized to deoxyhexoses used for the biosynthesis of aromatic amino acids in methanogens. The protein is 5'-deoxyadenosine deaminase of Methanothermobacter thermautotrophicus (strain ATCC 29096 / DSM 1053 / JCM 10044 / NBRC 100330 / Delta H) (Methanobacterium thermoautotrophicum).